A 347-amino-acid chain; its full sequence is DNA-directed RNA polymerase subunit alpha (347 aa).

The interval 1 to 226 (MLISQRPTLS…ELFGLARELN (226 aa)) is alpha N-terminal domain (alpha-NTD). An alpha C-terminal domain (alpha-CTD) region spans residues 243–347 (HIASFALPID…SQDYAETEQL (105 aa)). The segment at 326–347 (TTGTWSTDGAYDSQDYAETEQL) is disordered.

Belongs to the RNA polymerase alpha chain family. Homodimer. The RNAP catalytic core consists of 2 alpha, 1 beta, 1 beta' and 1 omega subunit. When a sigma factor is associated with the core the holoenzyme is formed, which can initiate transcription.

It carries out the reaction RNA(n) + a ribonucleoside 5'-triphosphate = RNA(n+1) + diphosphate. In terms of biological role, DNA-dependent RNA polymerase catalyzes the transcription of DNA into RNA using the four ribonucleoside triphosphates as substrates. The protein is DNA-directed RNA polymerase subunit alpha of Mycobacterium leprae (strain TN).